The primary structure comprises 409 residues: Arginine deiminase (409 aa).

Cysteine 399 (amidino-cysteine intermediate) is an active-site residue.

This sequence belongs to the arginine deiminase family.

The protein localises to the cytoplasm. The enzyme catalyses L-arginine + H2O = L-citrulline + NH4(+). Its pathway is amino-acid degradation; L-arginine degradation via ADI pathway; carbamoyl phosphate from L-arginine: step 1/2. The protein is Arginine deiminase of Borrelia garinii subsp. bavariensis (strain ATCC BAA-2496 / DSM 23469 / PBi) (Borreliella bavariensis).